We begin with the raw amino-acid sequence, 293 residues long: Ribosomal RNA small subunit methyltransferase H (293 aa).

S-adenosyl-L-methionine is bound by residues 32–34 (GGH), aspartate 51, phenylalanine 78, aspartate 99, and glutamine 106. The tract at residues 272 to 293 (SDEEIKENPASRSAKLRVGRRI) is disordered.

The protein belongs to the methyltransferase superfamily. RsmH family.

The protein resides in the cytoplasm. The enzyme catalyses cytidine(1402) in 16S rRNA + S-adenosyl-L-methionine = N(4)-methylcytidine(1402) in 16S rRNA + S-adenosyl-L-homocysteine + H(+). In terms of biological role, specifically methylates the N4 position of cytidine in position 1402 (C1402) of 16S rRNA. The chain is Ribosomal RNA small subunit methyltransferase H from Sulfurihydrogenibium sp. (strain YO3AOP1).